The primary structure comprises 620 residues: MSFDIAKYPTLALVDSTQELRLLPKESLPKLCDELRRYLLDSVSRSSGHFASGLGTVELTVALHYVYNTPFDQLIWDVGHQAYPHKILTGRRDKIGTIRQKGGLHPFPWRGESEYDVLSVGHSSTSISAGIGIAVAAEKEGKDRRTVCVIGDGAITAGMAFEAMNHAGDIRPDMLVILNDNEMSISENVGALNNHLARLLSGKLYSSLREGGKKVFSGVPPIKELLKRTEEHIKGMVVPGTLFEELGFNYIGPVDGHDVMGLISTLKNMRDLKGPQFLHIMTKKGRGYEPAEKDPITFHAVPKFDPSSGCLPKSSGGLPGYSKIFGDWLCETAAKDSKLMAITPAMREGSGMVEFSRKFPDRYFDVAIAEQHAVTFAAGLAIGGYKPVVAIYSTFLQRAYDQVIHDVAIQKLPVMFAIDRAGIVGADGQTHQGAFDLSYLRCIPDMVIMTPSDENECRQMLFTGYHYNDGPTAVRYPRGNAQGVALTPLEKLPIGKGLVKRHGEKLAILNFGTLMPEAAKVAEALNATLVDMRFVKPLDDTLILEMAAQHDALVTLEENAIMGGAGSGVNEVLMAHRKPVPVLNIGLPDFFIPQGTQEEARAELGLDAAGIEAKIKAWLA.

Thiamine diphosphate is bound by residues His80 and 121–123 (GHS). Asp152 lines the Mg(2+) pocket. Thiamine diphosphate-binding positions include 153 to 154 (GA), Asn181, Tyr288, and Glu370. Asn181 is a Mg(2+) binding site.

The protein belongs to the transketolase family. DXPS subfamily. Homodimer. Mg(2+) serves as cofactor. Thiamine diphosphate is required as a cofactor.

It carries out the reaction D-glyceraldehyde 3-phosphate + pyruvate + H(+) = 1-deoxy-D-xylulose 5-phosphate + CO2. Its pathway is metabolic intermediate biosynthesis; 1-deoxy-D-xylulose 5-phosphate biosynthesis; 1-deoxy-D-xylulose 5-phosphate from D-glyceraldehyde 3-phosphate and pyruvate: step 1/1. Functionally, catalyzes the acyloin condensation reaction between C atoms 2 and 3 of pyruvate and glyceraldehyde 3-phosphate to yield 1-deoxy-D-xylulose-5-phosphate (DXP). This Salmonella typhi protein is 1-deoxy-D-xylulose-5-phosphate synthase.